Consider the following 169-residue polypeptide: Putative hydrolase 111R (169 aa).

Residues 46–169 form the Nudix hydrolase domain; sequence FEKRKAGVFV…QKILMALSCN (124 aa). Residues 76-98 carry the Nudix box motif; sequence GHMEAYDHSPKTCAERELKEETG. Residues glutamate 92, glutamate 96, and aspartate 138 each coordinate Mg(2+).

It belongs to the Nudix hydrolase family. It depends on Mg(2+) as a cofactor. Mn(2+) is required as a cofactor.

This chain is Putative hydrolase 111R, found in Aedes vexans (Inland floodwater mosquito).